Consider the following 261-residue polypeptide: MAAACRSVKGLVALITGGASGLGLATAERLVGQGATAVLLDLPNSDGETQAKKLGKSCAFAPADVTSEKDVQAALTLAREKFGRVDVAVNCAGIAVASKTYNLKKSQAHTLEDFQRVINVNLIGTFNVIRLVAGEMGQNEPDQGGQRGVIINTASVAAFEGQVGQAAYSASKGGIVGMTLPIARDLAPMGIRVMTIAPGLFGTPLLTTLPDKVRNFLASQVPFPSRLGDPAEYAHLVQAIIENSFLNGEVIRLDGAIRMQP.

The residue at position 2 (Ala-2) is an N-acetylalanine. Residues Ser-20, Leu-22, and Asp-41 each coordinate NAD(+). The residue at position 53 (Lys-53) is an N6-acetyllysine; alternate. The residue at position 53 (Lys-53) is an N6-succinyllysine; alternate. NAD(+) is bound by residues Asp-64 and Val-65. N6-acetyllysine is present on Lys-69. Cys-91 contacts NAD(+). An N6-acetyllysine mark is found at Lys-99 and Lys-105. Ser-155 lines the substrate pocket. NAD(+)-binding residues include Tyr-168, Lys-172, Phe-201, and Thr-203. The active-site Proton acceptor is Tyr-168. Lys-212 carries the N6-acetyllysine; alternate modification. The residue at position 212 (Lys-212) is an N6-succinyllysine; alternate.

The protein belongs to the short-chain dehydrogenases/reductases (SDR) family. As to quaternary structure, homotetramer. Component of mitochondrial ribonuclease P, a complex composed of TRMT10C/MRPP1, HSD17B10/MRPP2 and PRORP/MRPP3. Interacts with TRMT10C/MRPP1; forming the MRPP1-MRPP2 subcomplex of the mitochondrial ribonuclease P complex.

It localises to the mitochondrion. Its subcellular location is the mitochondrion matrix. The protein resides in the mitochondrion nucleoid. The enzyme catalyses a (3S)-3-hydroxyacyl-CoA + NAD(+) = a 3-oxoacyl-CoA + NADH + H(+). It carries out the reaction (2S,3S)-3-hydroxy-2-methylbutanoyl-CoA + NAD(+) = 2-methyl-3-oxobutanoyl-CoA + NADH + H(+). The catalysed reaction is testosterone + NAD(+) = androst-4-ene-3,17-dione + NADH + H(+). It catalyses the reaction 5alpha-androstane-3alpha,17beta-diol + NAD(+) = 17beta-hydroxy-5alpha-androstan-3-one + NADH + H(+). The enzyme catalyses 17beta-estradiol + NAD(+) = estrone + NADH + H(+). It carries out the reaction cholate + NAD(+) = 3alpha,12alpha-dihydroxy-7-oxo-5beta-cholanate + NADH + H(+). The catalysed reaction is (3S)-3-hydroxybutanoyl-CoA + NAD(+) = acetoacetyl-CoA + NADH + H(+). It catalyses the reaction (3S)-hydroxyoctanoyl-CoA + NAD(+) = 3-oxooctanoyl-CoA + NADH + H(+). The enzyme catalyses (3S)-hydroxyhexadecanoyl-CoA + NAD(+) = 3-oxohexadecanoyl-CoA + NADH + H(+). It carries out the reaction 17beta-hydroxy-5alpha-androstan-3-one + NAD(+) = 5alpha-androstan-3,17-dione + NADH + H(+). The catalysed reaction is 5alpha-pregnan-20beta-ol-3-one + NAD(+) = 5alpha-pregnane-3,20-dione + NADH + H(+). It catalyses the reaction 3alpha-hydroxy-5alpha-pregnan-20-one + NAD(+) = 5alpha-pregnane-3,20-dione + NADH + H(+). The enzyme catalyses cortisone + NAD(+) = 17alpha-hydroxypregn-4-en-3,11,20-trione-21-al + NADH + H(+). It carries out the reaction 11-dehydrocorticosterone + NAD(+) = pregn-4-ene-3,11,20,21-tetraone + NADH + H(+). The catalysed reaction is cortisol + NAD(+) = 11beta,17alpha-dihydroxypregn-4-ene-3,20,21-trione + NADH + H(+). It catalyses the reaction chenodeoxycholate + NAD(+) = 7-oxolithocholate + NADH + H(+). The enzyme catalyses ursodeoxycholate + NAD(+) = 7-oxolithocholate + NADH + H(+). It carries out the reaction 3beta,7beta-dihydroxy-5beta-cholan-24-oate + NAD(+) = 3beta-hydroxy-7-oxo-5beta-cholan-24-oate + NADH + H(+). It functions in the pathway amino-acid degradation; L-isoleucine degradation. It participates in lipid metabolism; fatty acid beta-oxidation. The protein operates within steroid metabolism. Its pathway is lipid metabolism; bile acid biosynthesis. Its function is as follows. Mitochondrial dehydrogenase involved in pathways of fatty acid, branched-chain amino acid and steroid metabolism. Acts as (S)-3-hydroxyacyl-CoA dehydrogenase in mitochondrial fatty acid beta-oxidation, a major degradation pathway of fatty acids. Catalyzes the third step in the beta-oxidation cycle, namely the reversible conversion of (S)-3-hydroxyacyl-CoA to 3-ketoacyl-CoA. Preferentially accepts straight medium- and short-chain acyl-CoA substrates with highest efficiency for (3S)-hydroxybutanoyl-CoA. Acts as 3-hydroxy-2-methylbutyryl-CoA dehydrogenase in branched-chain amino acid catabolic pathway. Catalyzes the oxidation of 3-hydroxy-2-methylbutanoyl-CoA into 2-methyl-3-oxobutanoyl-CoA, a step in isoleucine degradation pathway. Has hydroxysteroid dehydrogenase activity toward steroid hormones and bile acids. Catalyzes the oxidation of 3alpha-, 17beta-, 20beta- and 21-hydroxysteroids and 7alpha- and 7beta-hydroxy bile acids. Oxidizes allopregnanolone/brexanolone at the 3alpha-hydroxyl group, which is known to be critical for the activation of gamma-aminobutyric acid receptors (GABAARs) chloride channel. Has phospholipase C-like activity toward cardiolipin and its oxidized species. Likely oxidizes the 2'-hydroxyl in the head group of cardiolipin to form a ketone intermediate that undergoes nucleophilic attack by water and fragments into diacylglycerol, dihydroxyacetone and orthophosphate. Has higher affinity for cardiolipin with oxidized fatty acids and may degrade these species during the oxidative stress response to protect cells from apoptosis. By interacting with intracellular amyloid-beta, it may contribute to the neuronal dysfunction associated with Alzheimer disease (AD). Essential for structural and functional integrity of mitochondria. In addition to mitochondrial dehydrogenase activity, moonlights as a component of mitochondrial ribonuclease P, a complex that cleaves tRNA molecules in their 5'-ends. Together with TRMT10C/MRPP1, forms a subcomplex of the mitochondrial ribonuclease P, named MRPP1-MRPP2 subcomplex, which displays functions that are independent of the ribonuclease P activity. The MRPP1-MRPP2 subcomplex catalyzes the formation of N(1)-methylguanine and N(1)-methyladenine at position 9 (m1G9 and m1A9, respectively) in tRNAs; HSD17B10/MRPP2 acting as a non-catalytic subunit. The MRPP1-MRPP2 subcomplex also acts as a tRNA maturation platform: following 5'-end cleavage by the mitochondrial ribonuclease P complex, the MRPP1-MRPP2 subcomplex enhances the efficiency of 3'-processing catalyzed by ELAC2, retains the tRNA product after ELAC2 processing and presents the nascent tRNA to the mitochondrial CCA tRNA nucleotidyltransferase TRNT1 enzyme. Associates with mitochondrial DNA complexes at the nucleoids to initiate RNA processing and ribosome assembly. This Bos taurus (Bovine) protein is 3-hydroxyacyl-CoA dehydrogenase type-2 (HSD17B10).